The following is a 267-amino-acid chain: Cell division protein FtsQ (267 aa).

At Met1–Ala32 the chain is on the cytoplasmic side. Residues Ile33–Phe53 form a helical membrane-spanning segment. Over Ala54–Tyr267 the chain is Periplasmic. Positions Phe73–Arg141 constitute a POTRA domain.

This sequence belongs to the FtsQ/DivIB family. FtsQ subfamily.

It is found in the cell inner membrane. In terms of biological role, essential cell division protein. The sequence is that of Cell division protein FtsQ from Rickettsia felis (strain ATCC VR-1525 / URRWXCal2) (Rickettsia azadi).